The following is a 144-amino-acid chain: Globin (144 aa).

Ala-1 carries the N-acetylalanine modification. The region spanning 1-144 (ALSAADAGLL…IISALQSAGK (144 aa)) is the Globin domain. His-95 is a binding site for heme b.

This sequence belongs to the globin family. As to quaternary structure, monomer.

The sequence is that of Globin from Aplysia juliana (Walking sea hare).